The sequence spans 1114 residues: Kinesin-like protein KIN-12F (1114 aa).

The tract at residues 1 to 84 (MADNRIAGSL…RSQVSASRPR (84 aa)) is disordered. Composition is skewed to polar residues over residues 10-39 (LPTS…SNPD) and 48-80 (PNIH…QVSA). Positions 104–436 (HVKVVVRIKP…LRFGERAKAM (333 aa)) constitute a Kinesin motor domain. 175–182 (GQNGSGKT) is a binding site for ATP. 3 coiled-coil regions span residues 761–791 (QQEL…QTED), 872–942 (ARSF…LRRA), and 1038–1081 (EVLV…HKLE). Residues 1092–1114 (NTLPESALQPLHQRNSAIEEEGM) form a disordered region.

The protein belongs to the TRAFAC class myosin-kinesin ATPase superfamily. Kinesin family. KIN-12 subfamily.

The chain is Kinesin-like protein KIN-12F from Arabidopsis thaliana (Mouse-ear cress).